Reading from the N-terminus, the 466-residue chain is MAKTLYEKLFDAHVVYEAQNETPLLYIDRHLVHEVTSPQAFDGLRAHGRQVRQPGKTFATMDHNVSTQTKDINASGEMARIQMQELIKNCKEFGVELYDLNHPYQGIVHVMGPEQGVTLPGMTIVCGDSHTATHGAFGALAFGIGTSEVEHVLATQTLKQGRAKTMKIEVQGKAAPGITAKDIVLAIIGKTGSAGGTGHVVEFCGEAIRDLSMEGRMTLCNMAIEMGAKAGLVAPDETTFNYVRGRLHAPKGKDFDDAVAYWKTLKTDDGATFDTVVTLQAAEIAPQVTWGTNPGQVISVTDNIPDPASFSDPVERASAEKALAYMGLKSGIPLTEVAIDKVFIGSCTNSRIEDLRAAAEIAKGRKVAPGVQALVVPGSGPVKAQAEAEGLDKIFIEAGFEWRLPGCSMCLAMNNDRLNPGERCASTSNRNFEGRQGRGGRTHLVSPAMAAAAAVTGHFADIRNLK.

Positions 347, 407, and 410 each coordinate [4Fe-4S] cluster.

It belongs to the aconitase/IPM isomerase family. LeuC type 1 subfamily. As to quaternary structure, heterodimer of LeuC and LeuD. [4Fe-4S] cluster serves as cofactor.

It carries out the reaction (2R,3S)-3-isopropylmalate = (2S)-2-isopropylmalate. It participates in amino-acid biosynthesis; L-leucine biosynthesis; L-leucine from 3-methyl-2-oxobutanoate: step 2/4. Its function is as follows. Catalyzes the isomerization between 2-isopropylmalate and 3-isopropylmalate, via the formation of 2-isopropylmaleate. The polypeptide is 3-isopropylmalate dehydratase large subunit (Klebsiella pneumoniae subsp. pneumoniae (strain ATCC 700721 / MGH 78578)).